We begin with the raw amino-acid sequence, 581 residues long: Sabinene synthase 1, chloroplastic (581 aa).

A chloroplast-targeting transit peptide spans 1–28 (MPLNSLHNLERKPSKAWSTSCTAPAARL). The (2E)-geranyl diphosphate site is built by R297, D334, D338, R475, and D478. D334 and D338 together coordinate Mg(2+). Positions 334-338 (DDVYD) match the DDXXD motif motif. D478, T482, and E486 together coordinate Mg(2+).

The protein belongs to the terpene synthase family. Tpsb subfamily. Mg(2+) serves as cofactor. It depends on Mn(2+) as a cofactor.

Its subcellular location is the plastid. The protein resides in the chloroplast. The enzyme catalyses (2E)-geranyl diphosphate = sabinene + diphosphate. It catalyses the reaction (2E)-geranyl diphosphate = beta-myrcene + diphosphate. The protein operates within secondary metabolite biosynthesis; terpenoid biosynthesis. In terms of biological role, monoterpene synthase (TPS) involved in the biosynthesis of monoterpene natural products, components of the chemical defense arsenal. Catalyzes the conversion of (2E)-geranyl diphosphate (GPP) into sabinene, and, as minor products, myrcene. The protein is Sabinene synthase 1, chloroplastic of Salvia pomifera (Apple sage).